Reading from the N-terminus, the 532-residue chain is Putative sodium-dependent excitatory amino acid transporter glt-3 (532 aa).

Topologically, residues 1–5 are cytoplasmic; that stretch reads MGMKK. 3 helical membrane-spanning segments follow: residues 6-26, 46-66, and 83-103; these read DLLL…GFVI, FMQI…ISAL, and IYYM…VSSI. Topologically, residues 104–181 are extracellular; sequence HPGDPELIHE…SEVLHKQTLT (78 aa). N-linked (GlcNAc...) asparagine glycosylation is found at asparagine 164 and asparagine 169. 5 consecutive transmembrane segments (helical) span residues 182 to 202, 222 to 242, 264 to 284, 352 to 372, and 383 to 402; these read YTNE…GIIL, IIMR…LSLV, VTVI…LYFL, AVAV…MDLV, and IGSG…LTTV.

It belongs to the dicarboxylate/amino acid:cation symporter (DAACS) (TC 2.A.23) family.

It is found in the membrane. In Caenorhabditis elegans, this protein is Putative sodium-dependent excitatory amino acid transporter glt-3 (glt-3).